The chain runs to 223 residues: Ribonuclease 3 (223 aa).

Residues 3 to 125 (LERLQKKLGY…IIAAVYLDAG (123 aa)) form the RNase III domain. Position 38 (glutamate 38) interacts with Mg(2+). Aspartate 42 is a catalytic residue. Mg(2+) contacts are provided by aspartate 111 and glutamate 114. Residue glutamate 114 is part of the active site. Residues 152–222 (DPKTRLQEYL…ALQVIKVLGI (71 aa)) enclose the DRBM domain.

This sequence belongs to the ribonuclease III family. Homodimer. Mg(2+) is required as a cofactor.

It is found in the cytoplasm. The catalysed reaction is Endonucleolytic cleavage to 5'-phosphomonoester.. Its function is as follows. Digests double-stranded RNA. Involved in the processing of primary rRNA transcript to yield the immediate precursors to the large and small rRNAs (23S and 16S). Processes some mRNAs, and tRNAs when they are encoded in the rRNA operon. Processes pre-crRNA and tracrRNA of type II CRISPR loci if present in the organism. This is Ribonuclease 3 from Glaesserella parasuis serovar 5 (strain SH0165) (Haemophilus parasuis).